We begin with the raw amino-acid sequence, 371 residues long: tRNA-specific 2-thiouridylase MnmA (371 aa).

ATP contacts are provided by residues 13 to 20 (GMSGGVDS) and Met39. The interval 99–101 (NPD) is interaction with target base in tRNA. Cys104 functions as the Nucleophile in the catalytic mechanism. Residues Cys104 and Cys200 are joined by a disulfide bond. Gly128 is an ATP binding site. The segment at 150 to 152 (KDQ) is interaction with tRNA. The Cysteine persulfide intermediate role is filled by Cys200. The segment at 308-309 (RY) is interaction with tRNA.

This sequence belongs to the MnmA/TRMU family.

It is found in the cytoplasm. The enzyme catalyses S-sulfanyl-L-cysteinyl-[protein] + uridine(34) in tRNA + AH2 + ATP = 2-thiouridine(34) in tRNA + L-cysteinyl-[protein] + A + AMP + diphosphate + H(+). Functionally, catalyzes the 2-thiolation of uridine at the wobble position (U34) of tRNA, leading to the formation of s(2)U34. This is tRNA-specific 2-thiouridylase MnmA from Bacillus thuringiensis (strain Al Hakam).